Here is a 268-residue protein sequence, read N- to C-terminus: Trans-aconitate 2-methyltransferase (268 aa).

It belongs to the methyltransferase superfamily. Tam family.

Its subcellular location is the cytoplasm. The enzyme catalyses trans-aconitate + S-adenosyl-L-methionine = (E)-3-(methoxycarbonyl)pent-2-enedioate + S-adenosyl-L-homocysteine. Catalyzes the S-adenosylmethionine monomethyl esterification of trans-aconitate. This Delftia acidovorans (strain DSM 14801 / SPH-1) protein is Trans-aconitate 2-methyltransferase.